Here is a 238-residue protein sequence, read N- to C-terminus: Putative ABC transporter ATP-binding protein AF_1841 (238 aa).

The ABC transporter domain maps to 8–238 (IEADSVSYDY…EELLEKAGVI (231 aa)). Residue 41-48 (GANGSGKS) coordinates ATP.

Belongs to the ABC transporter superfamily.

The protein resides in the cell membrane. In terms of biological role, probably part of an ABC transporter complex. Responsible for energy coupling to the transport system. The chain is Putative ABC transporter ATP-binding protein AF_1841 from Archaeoglobus fulgidus (strain ATCC 49558 / DSM 4304 / JCM 9628 / NBRC 100126 / VC-16).